The sequence spans 295 residues: Acetylglutamate kinase (295 aa).

Substrate-binding positions include 66 to 67 (GG), R88, and N193.

Belongs to the acetylglutamate kinase family. ArgB subfamily.

The protein resides in the cytoplasm. The enzyme catalyses N-acetyl-L-glutamate + ATP = N-acetyl-L-glutamyl 5-phosphate + ADP. It functions in the pathway amino-acid biosynthesis; L-arginine biosynthesis; N(2)-acetyl-L-ornithine from L-glutamate: step 2/4. Its function is as follows. Catalyzes the ATP-dependent phosphorylation of N-acetyl-L-glutamate. This Rhizobium etli (strain CIAT 652) protein is Acetylglutamate kinase.